The sequence spans 384 residues: Tryptophan--tRNA ligase (384 aa).

The 'HIGH' region signature appears at 81–89 (PSGPMHIGH). A 'KMSKS' region motif is present at residues 252–256 (KMSAS).

Belongs to the class-I aminoacyl-tRNA synthetase family.

It is found in the cytoplasm. The catalysed reaction is tRNA(Trp) + L-tryptophan + ATP = L-tryptophyl-tRNA(Trp) + AMP + diphosphate + H(+). The chain is Tryptophan--tRNA ligase from Thermococcus sibiricus (strain DSM 12597 / MM 739).